The chain runs to 1393 residues: Polarized growth protein RAX2 (1393 aa).

The signal sequence occupies residues 1 to 21 (MLVQFQQLLLLLISIIKLCQA). Over 22–1329 (DDNDNSFFQP…TNKNLSRGKV (1308 aa)) the chain is Extracellular. 48 N-linked (GlcNAc...) asparagine glycosylation sites follow: Asn62, Asn85, Asn105, Asn125, Asn133, Asn139, Asn164, Asn186, Asn195, Asn212, Asn256, Asn260, Asn266, Asn269, Asn362, Asn398, Asn405, Asn479, Asn536, Asn542, Asn565, Asn599, Asn646, Asn649, Asn653, Asn674, Asn689, Asn696, Asn702, Asn714, Asn747, Asn764, Asn768, Asn792, Asn829, Asn863, Asn899, Asn935, Asn946, Asn958, Asn985, Asn1020, Asn1030, Asn1041, Asn1213, Asn1232, Asn1262, and Asn1323. A helical membrane pass occupies residues 1330–1350 (VGISLACALGSTTLLGLLYII). Residues 1351-1393 (PYFALFKNRKDGYFQPERIHEDEMMDAVNPEDLLHEIDLQREK) lie on the Cytoplasmic side of the membrane.

It belongs to the RAX2 family.

It localises to the cell membrane. The protein localises to the cell tip. Required for establishing sites of emergence of yeast and hyphal daughters and for maintaining the linearity of hyphal growth, but not involved in responses that require a reorientation of the direction of already established hyphal growth (tropisms). Does not play a role in penetration or injury of human epithelial cells. In Candida albicans (strain SC5314 / ATCC MYA-2876) (Yeast), this protein is Polarized growth protein RAX2.